A 546-amino-acid polypeptide reads, in one-letter code: Chaperonin GroEL 1 (546 aa).

Residues 30–33 (TLGP), Lys51, 87–91 (DGTTT), Gly415, 479–481 (NAA), and Asp495 contribute to the ATP site.

Belongs to the chaperonin (HSP60) family. Forms a cylinder of 14 subunits composed of two heptameric rings stacked back-to-back. Interacts with the co-chaperonin GroES.

Its subcellular location is the cytoplasm. It catalyses the reaction ATP + H2O + a folded polypeptide = ADP + phosphate + an unfolded polypeptide.. Its function is as follows. Together with its co-chaperonin GroES, plays an essential role in assisting protein folding. The GroEL-GroES system forms a nano-cage that allows encapsulation of the non-native substrate proteins and provides a physical environment optimized to promote and accelerate protein folding. The chain is Chaperonin GroEL 1 from Vibrio vulnificus (strain CMCP6).